The following is a 763-amino-acid chain: Xaa-Pro dipeptidyl-peptidase (763 aa).

Catalysis depends on charge relay system residues serine 349, aspartate 469, and histidine 499.

The protein belongs to the peptidase S15 family. In terms of assembly, homodimer.

It localises to the cytoplasm. It carries out the reaction Hydrolyzes Xaa-Pro-|- bonds to release unblocked, N-terminal dipeptides from substrates including Ala-Pro-|-p-nitroanilide and (sequentially) Tyr-Pro-|-Phe-Pro-|-Gly-Pro-|-Ile.. In terms of biological role, removes N-terminal dipeptides sequentially from polypeptides having unsubstituted N-termini provided that the penultimate residue is proline. This chain is Xaa-Pro dipeptidyl-peptidase, found in Streptococcus macedonicus (Streptococcus gallolyticus macedonicus).